The following is a 334-amino-acid chain: Serine/Arginine-related protein 53 (334 aa).

Positions 1–13 are enriched in basic and acidic residues; that stretch reads MGRRSSDTEEESR. 3 disordered regions span residues 1-179, 201-220, and 243-290; these read MGRR…HLPP, LKAK…EDQA, and QTFR…SIPT. 2 stretches are compositionally biased toward basic residues: residues 14 to 24 and 35 to 50; these read SKRKKKHRRRS and YSRK…KSRS. A compositionally biased stretch (basic and acidic residues) spans 51 to 62; sequence WSRDLQPRSHSY. The span at 78 to 118 shows a compositional bias: basic residues; it reads SRRKRSRSRSRGRGKSYRVQRSRSKSRTRRSRSRPRLRSHS. Composition is skewed to basic and acidic residues over residues 132 to 166, 201 to 218, and 247 to 259; these read RSRD…KRGE, LKAK…KEED, and SSKE…EPSE. Positions 180-236 form a coiled coil; it reads AEQAKARLQLVLEAAAKADEALKAKERNEEEAKRRKEEDQATLVEQVKRVKEIEAIE.

As to quaternary structure, interacts (via Arg/Ser-rich domain) with LUC7L3, RBM39 and RSF1. Post-translationally, phosphorylated. Widely expressed. Expressed in brain, spinal cord, cerebellum.

Its subcellular location is the nucleus. It localises to the nucleus speckle. The protein localises to the cytoplasm. Functionally, has a role in alternative splicing and transcription regulation. Involved in both constitutive and alternative pre-mRNA splicing. May have a role in the recognition of the 3' splice site during the second step of splicing. The polypeptide is Serine/Arginine-related protein 53 (RSRC1) (Homo sapiens (Human)).